The primary structure comprises 319 residues: Mitochondrial fission regulator 1-like-A (319 aa).

Residues 1–37 (MASLGAAAEPERNLFGKDEAEAYESPEGRRSGRKKRT) form a disordered region. Positions 9-30 (EPERNLFGKDEAEAYESPEGRR) are enriched in basic and acidic residues.

This sequence belongs to the MTFR1 family.

The protein resides in the mitochondrion outer membrane. In terms of biological role, mitochondrial protein required for adaptation of miochondrial dynamics to metabolic changes. Regulates mitochondrial morphology at steady state and mediates AMPK-dependent stress-induced mitochondrial fragmentation via the control of OPA1 levels. This is Mitochondrial fission regulator 1-like-A (mtfr1l-a) from Xenopus laevis (African clawed frog).